We begin with the raw amino-acid sequence, 547 residues long: Methionine--tRNA ligase (547 aa).

Residues 15–25 (PYANGSLHLGH) carry the 'HIGH' region motif. Zn(2+) is bound by residues C146, C149, C159, and C162. A 'KMSKS' region motif is present at residues 332-336 (KMSKS). An ATP-binding site is contributed by K335.

This sequence belongs to the class-I aminoacyl-tRNA synthetase family. MetG type 1 subfamily. As to quaternary structure, monomer. Zn(2+) is required as a cofactor.

The protein localises to the cytoplasm. It catalyses the reaction tRNA(Met) + L-methionine + ATP = L-methionyl-tRNA(Met) + AMP + diphosphate. In terms of biological role, is required not only for elongation of protein synthesis but also for the initiation of all mRNA translation through initiator tRNA(fMet) aminoacylation. The chain is Methionine--tRNA ligase from Baumannia cicadellinicola subsp. Homalodisca coagulata.